The primary structure comprises 207 residues: MNPSRIRIKMCGMTRSEDIQYAIDLGVDAIGLIFYPKSARNVSLEKARIIVNNIPPFVDIVAVLVNPEQSFVQLIINEIPVQLLQFHGEESSEFCRQFNKPFIKAIHPKTAIQIQSAVDEFFDASAILLDTPSDKERGGTGLTFDWNIIPENLSKPYILAGGLNESNILEAITMCHPYAVDVCSGIEASPGVKDHLKMSRFIKAIWG.

It belongs to the TrpF family.

The catalysed reaction is N-(5-phospho-beta-D-ribosyl)anthranilate = 1-(2-carboxyphenylamino)-1-deoxy-D-ribulose 5-phosphate. It participates in amino-acid biosynthesis; L-tryptophan biosynthesis; L-tryptophan from chorismate: step 3/5. The polypeptide is N-(5'-phosphoribosyl)anthranilate isomerase (Legionella pneumophila (strain Paris)).